Consider the following 1888-residue polypeptide: Nuclear pore membrane glycoprotein 210-like (1888 aa).

The first 35 residues, 1-35 (MTGCPASSRRRGFGLFFFLRLHRLLLLFLVLRGTL), serve as a signal peptide directing secretion. N-linked (GlcNAc...) asparagine glycosylation is found at Asn84, Asn304, Asn348, Asn495, Asn522, Asn812, and Asn931. Residues 1082–1154 (FPPFRLLPEK…TIQTVNEDTG (73 aa)) enclose the BIG2 domain. An N-linked (GlcNAc...) asparagine glycan is attached at Asn1445. The helical transmembrane segment at 1813-1833 (ILLLTLFAVLASTASIFLAYN) threads the bilayer. N-linked (GlcNAc...) asparagine glycosylation occurs at Asn1859.

Belongs to the NUP210 family.

Its subcellular location is the nucleus membrane. The sequence is that of Nuclear pore membrane glycoprotein 210-like (NUP210L) from Homo sapiens (Human).